We begin with the raw amino-acid sequence, 554 residues long: ATP-dependent RNA helicase MRH4, mitochondrial (554 aa).

The N-terminal 54 residues, 1–54, are a transit peptide targeting the mitochondrion; it reads MSSVGIASASLWLRGPVKSALKGRWLSCEQMRRYGTKSAPAVRKGGHSKKARQA. Residues 119–140 carry the Q motif motif; it reads DCGLDDKRVAAFLGQVQPTPIQ. The Helicase ATP-binding domain occupies 150 to 337; the sequence is TLMEPQLQVH…NKLFPNLQVV (188 aa). 163–170 serves as a coordination point for ATP; it reads AETGSGKT. The DEAD box motif lies at 285–288; sequence DEAD. Residues 368–554 form the Helicase C-terminal domain; the sequence is ALAQALYAIM…PVVKKNRPIQ (187 aa). Residues 439-474 form a disordered region; that stretch reads RIQDQVRPSELKKPQERRLPNSNIKVADSKDNGQRS. Positions 445 to 457 are enriched in basic and acidic residues; it reads RPSELKKPQERRL.

The protein belongs to the DEAD box helicase family. MRH4 subfamily.

Its subcellular location is the mitochondrion. It carries out the reaction ATP + H2O = ADP + phosphate + H(+). ATP-binding RNA helicase involved in mitochondrial RNA metabolism. Required for maintenance of mitochondrial DNA. In Eremothecium gossypii (strain ATCC 10895 / CBS 109.51 / FGSC 9923 / NRRL Y-1056) (Yeast), this protein is ATP-dependent RNA helicase MRH4, mitochondrial (MRH4).